The following is a 1020-amino-acid chain: LLGL scribble cell polarity complex component 2 (1020 aa).

WD repeat units follow at residues 36–69 (SALG…FMGL), 76–117 (VTQI…DESF), 132–169 (ITVV…DRTI), 193–227 (ALQE…LYHF), 233–268 (LENI…QPEP), 282–324 (AITR…GQQT), 332–366 (VIGF…VIDL), 388–464 (TCSH…YKLS), 508–583 (QKIF…FVLV), 592–653 (TSLA…LRQS), 713–769 (VRTL…KEIQ), 778–830 (GILV…VSAK), 835–888 (LTAL…VRYS), and 902–925 (VFTK…SLST). A Phosphoserine modification is found at Ser653. Residues 653-669 (SFRRMRRSRVSSRKRHP) show a composition bias toward basic residues. The segment at 653-689 (SFRRMRRSRVSSRKRHPAGPPGEAQEGSAKAERPGLQ) is disordered. 2 disordered regions span residues 938–975 (AETK…PGLV) and 992–1020 (STLE…GGAE). A phosphoserine mark is found at Ser965 and Ser1015.

This sequence belongs to the WD repeat L(2)GL family. In terms of assembly, interacts with GPSM2/LGN, PRKCI/aPKC and PARD6B/Par-6. The complex is enhanced during mitosis. Interacts with DCAF1. Phosphorylated at Ser-653 by PRKCI. Phosphorylation is enhanced during cell polarization induced by calcium. Phosphorylation may occur during the cell-cell contact-induced cell polarization and may contribute to the segregation of LLGL2 from the PRKCI/aPKC and PARD6B/Par-6 complex.

The protein localises to the cytoplasm. Functionally, part of a complex with GPSM2/LGN, PRKCI/aPKC and PARD6B/Par-6, which may ensure the correct organization and orientation of bipolar spindles for normal cell division. This complex plays roles in the initial phase of the establishment of epithelial cell polarity. The chain is LLGL scribble cell polarity complex component 2 (LLGL2) from Homo sapiens (Human).